The primary structure comprises 235 residues: Elongation factor Tu, chloroplastic (235 aa).

One can recognise a tr-type G domain in the interval 1 to 125; sequence KNMITGAAQM…AVDEYIPTPV (125 aa). 47-50 is a GTP binding site; it reads NKQD.

The protein belongs to the TRAFAC class translation factor GTPase superfamily. Classic translation factor GTPase family. EF-Tu/EF-1A subfamily.

It localises to the plastid. The protein resides in the chloroplast. It catalyses the reaction GTP + H2O = GDP + phosphate + H(+). GTP hydrolase that promotes the GTP-dependent binding of aminoacyl-tRNA to the A-site of ribosomes during protein biosynthesis. In Gracilariopsis lemaneiformis (Red alga), this protein is Elongation factor Tu, chloroplastic (tufA).